The following is a 484-amino-acid chain: ATP synthase subunit beta (484 aa).

152-159 (GGAGVGKT) serves as a coordination point for ATP.

It belongs to the ATPase alpha/beta chains family. As to quaternary structure, F-type ATPases have 2 components, CF(1) - the catalytic core - and CF(0) - the membrane proton channel. CF(1) has five subunits: alpha(3), beta(3), gamma(1), delta(1), epsilon(1). CF(0) has three main subunits: a(1), b(2) and c(9-12). The alpha and beta chains form an alternating ring which encloses part of the gamma chain. CF(1) is attached to CF(0) by a central stalk formed by the gamma and epsilon chains, while a peripheral stalk is formed by the delta and b chains.

It is found in the cell inner membrane. It carries out the reaction ATP + H2O + 4 H(+)(in) = ADP + phosphate + 5 H(+)(out). Its function is as follows. Produces ATP from ADP in the presence of a proton gradient across the membrane. The catalytic sites are hosted primarily by the beta subunits. This is ATP synthase subunit beta from Campylobacter lari (strain RM2100 / D67 / ATCC BAA-1060).